The chain runs to 428 residues: 3-phosphoshikimate 1-carboxyvinyltransferase (428 aa).

Residues Lys-21, Ser-22, and Arg-26 each coordinate 3-phosphoshikimate. Residue Lys-21 participates in phosphoenolpyruvate binding. Phosphoenolpyruvate is bound by residues Gly-93 and Arg-121. 3-phosphoshikimate contacts are provided by Ser-166, Gln-168, Asp-314, and Lys-341. Phosphoenolpyruvate is bound at residue Gln-168. Asp-314 functions as the Proton acceptor in the catalytic mechanism. Phosphoenolpyruvate-binding residues include Arg-345 and Arg-388.

Belongs to the EPSP synthase family. As to quaternary structure, monomer.

Its subcellular location is the cytoplasm. It catalyses the reaction 3-phosphoshikimate + phosphoenolpyruvate = 5-O-(1-carboxyvinyl)-3-phosphoshikimate + phosphate. Its pathway is metabolic intermediate biosynthesis; chorismate biosynthesis; chorismate from D-erythrose 4-phosphate and phosphoenolpyruvate: step 6/7. In terms of biological role, catalyzes the transfer of the enolpyruvyl moiety of phosphoenolpyruvate (PEP) to the 5-hydroxyl of shikimate-3-phosphate (S3P) to produce enolpyruvyl shikimate-3-phosphate and inorganic phosphate. The sequence is that of 3-phosphoshikimate 1-carboxyvinyltransferase from Syntrophomonas wolfei subsp. wolfei (strain DSM 2245B / Goettingen).